A 208-amino-acid polypeptide reads, in one-letter code: NAD(P)H-quinone oxidoreductase subunit I (208 aa).

4Fe-4S ferredoxin-type domains are found at residues G55 to V84 and R95 to E124. [4Fe-4S] cluster contacts are provided by C64, C67, C70, C74, C104, C107, C110, and C114.

The protein belongs to the complex I 23 kDa subunit family. NDH-1 is composed of at least 11 different subunits. It depends on [4Fe-4S] cluster as a cofactor.

It localises to the cellular thylakoid membrane. It carries out the reaction a plastoquinone + NADH + (n+1) H(+)(in) = a plastoquinol + NAD(+) + n H(+)(out). The enzyme catalyses a plastoquinone + NADPH + (n+1) H(+)(in) = a plastoquinol + NADP(+) + n H(+)(out). In terms of biological role, NDH-1 shuttles electrons from an unknown electron donor, via FMN and iron-sulfur (Fe-S) centers, to quinones in the respiratory and/or the photosynthetic chain. The immediate electron acceptor for the enzyme in this species is believed to be plastoquinone. Couples the redox reaction to proton translocation, and thus conserves the redox energy in a proton gradient. In Prochlorococcus marinus (strain AS9601), this protein is NAD(P)H-quinone oxidoreductase subunit I.